A 252-amino-acid chain; its full sequence is Imidazole glycerol phosphate synthase subunit HisF (252 aa).

Active-site residues include Asp-11 and Asp-130.

Belongs to the HisA/HisF family. Heterodimer of HisH and HisF.

It localises to the cytoplasm. It catalyses the reaction 5-[(5-phospho-1-deoxy-D-ribulos-1-ylimino)methylamino]-1-(5-phospho-beta-D-ribosyl)imidazole-4-carboxamide + L-glutamine = D-erythro-1-(imidazol-4-yl)glycerol 3-phosphate + 5-amino-1-(5-phospho-beta-D-ribosyl)imidazole-4-carboxamide + L-glutamate + H(+). Its pathway is amino-acid biosynthesis; L-histidine biosynthesis; L-histidine from 5-phospho-alpha-D-ribose 1-diphosphate: step 5/9. Its function is as follows. IGPS catalyzes the conversion of PRFAR and glutamine to IGP, AICAR and glutamate. The HisF subunit catalyzes the cyclization activity that produces IGP and AICAR from PRFAR using the ammonia provided by the HisH subunit. The chain is Imidazole glycerol phosphate synthase subunit HisF from Bacillus cereus (strain AH187).